Consider the following 226-residue polypeptide: Cytidylate kinase (226 aa).

12–20 (GPSGAGKGT) serves as a coordination point for ATP.

Belongs to the cytidylate kinase family. Type 1 subfamily.

The protein localises to the cytoplasm. The enzyme catalyses CMP + ATP = CDP + ADP. It carries out the reaction dCMP + ATP = dCDP + ADP. The protein is Cytidylate kinase of Xanthomonas campestris pv. campestris (strain B100).